The primary structure comprises 554 residues: Alpha-taxilin (554 aa).

Positions 1 to 66 (MKNQDKKNGP…ARAKAAQPGA (66 aa)) are disordered. At Ser71 the chain carries Phosphoserine. The tract at residues 85 to 166 (YCVDNNQGGP…RRPQEKKKAK (82 aa)) is disordered. The span at 91–103 (QGGPAEEGAQGEP) shows a compositional bias: low complexity. Positions 143 to 158 (EEIRASDEVGDRDHRR) are enriched in basic and acidic residues. Positions 186-491 (EEKLAALCKK…NKRVQDLTAG (306 aa)) form a coiled coil. The disordered stretch occupies residues 492–554 (GITDIGSERR…GPGEPTPATA (63 aa)). Residues Ser515 and Ser523 each carry the phosphoserine modification.

The protein belongs to the taxilin family. As to quaternary structure, binds to the C-terminal coiled coil region of syntaxin family members STX1A, STX3A and STX4A, but not when these proteins are complexed with SNAP25, VAMP2 or STXBP1, suggesting that it interacts with syntaxins that do not form the SNARE complex.

Functionally, may be involved in intracellular vesicle traffic and potentially in calcium-dependent exocytosis in neuroendocrine cells. The chain is Alpha-taxilin (Txlna) from Mus musculus (Mouse).